The sequence spans 231 residues: Cytidylate kinase (231 aa).

Residue 16–24 (GPAASGKST) coordinates ATP. A disordered region spans residues 176-205 (PDLDSLEQEITKRDRDDAEREHAPLKKHPE). A compositionally biased stretch (basic and acidic residues) spans 184-205 (EITKRDRDDAEREHAPLKKHPE).

Belongs to the cytidylate kinase family. Type 1 subfamily.

The protein localises to the cytoplasm. It catalyses the reaction CMP + ATP = CDP + ADP. It carries out the reaction dCMP + ATP = dCDP + ADP. In Pelodictyon phaeoclathratiforme (strain DSM 5477 / BU-1), this protein is Cytidylate kinase.